The primary structure comprises 339 residues: Fructose-1,6-bisphosphatase isozyme 2 (339 aa).

Residues 3-10 (DRSPFETD) form an important for interaction with ALDOA region. AMP is bound by residues Val18 and 28-32 (TGELT). 2 residues coordinate Mg(2+): Asp69 and Glu98. Residue 113 to 114 (KY) coordinates AMP. The Mg(2+) site is built by Asp119, Leu121, and Asp122. Asp122 lines the substrate pocket. Arg141 serves as a coordination point for AMP. The short motif at 204–208 (KKKGK) is the Nuclear localization signal element. Residue 213–216 (NEGY) coordinates substrate. Residues Tyr216 and Tyr219 each carry the phosphotyrosine modification. Substrate is bound by residues 245 to 249 (YVGSM), Tyr265, and Lys275. Residue Glu281 coordinates Mg(2+).

It belongs to the FBPase class 1 family. In terms of assembly, homotetramer. Interacts with ALDOA; the interaction blocks inhibition by physiological concentrations of AMP and reduces inhibition by Ca(2+). Interacts with alpha-actinin and F-actin. Requires Mg(2+) as cofactor. As to expression, expressed in muscle, intestine, brain and placenta and very weakly in liver.

It localises to the cell junction. It is found in the cytoplasm. The protein resides in the nucleus. The protein localises to the myofibril. Its subcellular location is the sarcomere. It localises to the z line. It catalyses the reaction beta-D-fructose 1,6-bisphosphate + H2O = beta-D-fructose 6-phosphate + phosphate. It functions in the pathway carbohydrate biosynthesis; gluconeogenesis. With respect to regulation, subject to complex allosteric regulation. The enzyme can assume an active R-state, or an inactive T-state. Intermediate conformations may exist. AMP acts as an allosteric inhibitor. Fructose 2,6-bisphosphate acts as a competitive inhibitor. Strongly inhibited by Ca(2+). Functionally, catalyzes the hydrolysis of fructose 1,6-bisphosphate to fructose 6-phosphate in the presence of divalent cations and probably participates in glycogen synthesis from carbohydrate precursors, such as lactate. The polypeptide is Fructose-1,6-bisphosphatase isozyme 2 (Fbp2) (Mus musculus (Mouse)).